Here is a 203-residue protein sequence, read N- to C-terminus: High frequency lysogenization protein HflD homolog (203 aa).

The protein belongs to the HflD family.

It is found in the cytoplasm. The protein localises to the cell inner membrane. This is High frequency lysogenization protein HflD homolog from Aeromonas salmonicida (strain A449).